Here is a 98-residue protein sequence, read N- to C-terminus: UPF0473 protein LAR_0522 (98 aa).

This sequence belongs to the UPF0473 family.

This Limosilactobacillus reuteri subsp. reuteri (strain JCM 1112) (Lactobacillus reuteri) protein is UPF0473 protein LAR_0522.